A 131-amino-acid polypeptide reads, in one-letter code: Profilin (131 aa).

Belongs to the profilin family. As to quaternary structure, occurs in many kinds of cells as a complex with monomeric actin in a 1:1 ratio.

The protein localises to the cytoplasm. It is found in the cytoskeleton. Its function is as follows. Binds to actin and affects the structure of the cytoskeleton. At high concentrations, profilin prevents the polymerization of actin, whereas it enhances it at low concentrations. By binding to PIP2, it inhibits the formation of IP3 and DG. This is Profilin (PRO1) from Cynodon dactylon (Bermuda grass).